Consider the following 171-residue polypeptide: Protein BTG1 (171 aa).

Ser159 is subject to Phosphoserine.

This sequence belongs to the BTG family. In terms of assembly, interacts with CNOT7 and CNOT8.

Anti-proliferative protein. The sequence is that of Protein BTG1 (Btg1) from Rattus norvegicus (Rat).